Reading from the N-terminus, the 399-residue chain is Putative endoplasmin-like protein (399 aa).

Lys130 is covalently cross-linked (Glycyl lysine isopeptide (Lys-Gly) (interchain with G-Cter in SUMO2)). A disordered region spans residues Leu350–Leu399. Residues Val354–Glu367 are compositionally biased toward acidic residues. Residues Asp368–Leu399 show a composition bias toward basic and acidic residues.

This sequence belongs to the heat shock protein 90 family.

Putative molecular chaperone. The protein is Putative endoplasmin-like protein (HSP90B2P) of Homo sapiens (Human).